A 284-amino-acid polypeptide reads, in one-letter code: Tropomyosin beta chain (284 aa).

Met-1 bears the N-acetylmethionine mark. The stretch at 1-284 forms a coiled coil; sequence MEAIKKKMQM…DNALNDITSL (284 aa). 2 stretches are compositionally biased toward basic and acidic residues: residues 22–40 and 51–66; these read AEQAEADKKQAEDRCKQLE and KGTEDEVEKYSESVKE. The tract at residues 22-66 is disordered; it reads AEQAEADKKQAEDRCKQLEEEQQGLQKKLKGTEDEVEKYSESVKE.

This sequence belongs to the tropomyosin family. In terms of assembly, homodimer. Heterodimer of an alpha (TPM1, TPM3 or TPM4) and a beta (TPM2) chain.

It is found in the cytoplasm. The protein localises to the cytoskeleton. Its function is as follows. Binds to actin filaments in muscle and non-muscle cells. Plays a central role, in association with the troponin complex, in the calcium dependent regulation of vertebrate striated muscle contraction. Smooth muscle contraction is regulated by interaction with caldesmon. In non-muscle cells is implicated in stabilizing cytoskeleton actin filaments. The polypeptide is Tropomyosin beta chain (TPM2) (Gallus gallus (Chicken)).